A 107-amino-acid polypeptide reads, in one-letter code: Large ribosomal subunit protein eL33B (107 aa).

At alanine 2 the chain carries N-acetylalanine; partial. Residue lysine 47 forms a Glycyl lysine isopeptide (Lys-Gly) (interchain with G-Cter in ubiquitin) linkage.

This sequence belongs to the eukaryotic ribosomal protein eL33 family. Component of the large ribosomal subunit (LSU). Mature yeast ribosomes consist of a small (40S) and a large (60S) subunit. The 40S small subunit contains 1 molecule of ribosomal RNA (18S rRNA) and 33 different proteins (encoded by 57 genes). The large 60S subunit contains 3 rRNA molecules (25S, 5.8S and 5S rRNA) and 46 different proteins (encoded by 81 genes). In terms of processing, N-terminally acetylated by acetyltransferase NatA.

The protein resides in the cytoplasm. Functionally, component of the ribosome, a large ribonucleoprotein complex responsible for the synthesis of proteins in the cell. The small ribosomal subunit (SSU) binds messenger RNAs (mRNAs) and translates the encoded message by selecting cognate aminoacyl-transfer RNA (tRNA) molecules. The large subunit (LSU) contains the ribosomal catalytic site termed the peptidyl transferase center (PTC), which catalyzes the formation of peptide bonds, thereby polymerizing the amino acids delivered by tRNAs into a polypeptide chain. The nascent polypeptides leave the ribosome through a tunnel in the LSU and interact with protein factors that function in enzymatic processing, targeting, and the membrane insertion of nascent chains at the exit of the ribosomal tunnel. In Saccharomyces cerevisiae (strain ATCC 204508 / S288c) (Baker's yeast), this protein is Large ribosomal subunit protein eL33B.